A 172-amino-acid polypeptide reads, in one-letter code: Large ribosomal subunit protein uL10 (172 aa).

Belongs to the universal ribosomal protein uL10 family. In terms of assembly, part of the ribosomal stalk of the 50S ribosomal subunit. The N-terminus interacts with L11 and the large rRNA to form the base of the stalk. The C-terminus forms an elongated spine to which L12 dimers bind in a sequential fashion forming a multimeric L10(L12)X complex.

In terms of biological role, forms part of the ribosomal stalk, playing a central role in the interaction of the ribosome with GTP-bound translation factors. The chain is Large ribosomal subunit protein uL10 from Bartonella henselae (strain ATCC 49882 / DSM 28221 / CCUG 30454 / Houston 1) (Rochalimaea henselae).